A 239-amino-acid chain; its full sequence is Uridylate kinase (239 aa).

Position 12-15 (12-15 (KLSG)) interacts with ATP. The tract at residues 20–25 (GEKGFG) is involved in allosteric activation by GTP. A UMP-binding site is contributed by glycine 54. Residues glycine 55 and arginine 59 each coordinate ATP. UMP is bound by residues aspartate 72 and 133 to 140 (TGNPFFST). 2 residues coordinate ATP: tyrosine 166 and aspartate 169.

It belongs to the UMP kinase family. As to quaternary structure, homohexamer.

The protein localises to the cytoplasm. The catalysed reaction is UMP + ATP = UDP + ADP. It participates in pyrimidine metabolism; CTP biosynthesis via de novo pathway; UDP from UMP (UMPK route): step 1/1. With respect to regulation, allosterically activated by GTP. Inhibited by UTP. Its function is as follows. Catalyzes the reversible phosphorylation of UMP to UDP. The protein is Uridylate kinase of Caldicellulosiruptor saccharolyticus (strain ATCC 43494 / DSM 8903 / Tp8T 6331).